The sequence spans 350 residues: Uroporphyrinogen decarboxylase (350 aa).

Residues 27–31 (RQAGR), F46, D76, Y152, S207, and H321 each bind substrate.

This sequence belongs to the uroporphyrinogen decarboxylase family. As to quaternary structure, homodimer.

The protein resides in the cytoplasm. It catalyses the reaction uroporphyrinogen III + 4 H(+) = coproporphyrinogen III + 4 CO2. The protein operates within porphyrin-containing compound metabolism; protoporphyrin-IX biosynthesis; coproporphyrinogen-III from 5-aminolevulinate: step 4/4. In terms of biological role, catalyzes the decarboxylation of four acetate groups of uroporphyrinogen-III to yield coproporphyrinogen-III. This chain is Uroporphyrinogen decarboxylase, found in Listeria innocua serovar 6a (strain ATCC BAA-680 / CLIP 11262).